The following is a 113-amino-acid chain: Large ribosomal subunit protein uL22 (113 aa).

The protein belongs to the universal ribosomal protein uL22 family. As to quaternary structure, part of the 50S ribosomal subunit.

In terms of biological role, this protein binds specifically to 23S rRNA; its binding is stimulated by other ribosomal proteins, e.g. L4, L17, and L20. It is important during the early stages of 50S assembly. It makes multiple contacts with different domains of the 23S rRNA in the assembled 50S subunit and ribosome. Its function is as follows. The globular domain of the protein is located near the polypeptide exit tunnel on the outside of the subunit, while an extended beta-hairpin is found that lines the wall of the exit tunnel in the center of the 70S ribosome. This Desulforamulus reducens (strain ATCC BAA-1160 / DSM 100696 / MI-1) (Desulfotomaculum reducens) protein is Large ribosomal subunit protein uL22.